The following is a 61-amino-acid chain: Small ribosomal subunit protein uS14B (61 aa).

The Zn(2+) site is built by C24, C27, C40, and C43.

Belongs to the universal ribosomal protein uS14 family. Zinc-binding uS14 subfamily. As to quaternary structure, part of the 30S ribosomal subunit. Contacts proteins S3 and S10. The cofactor is Zn(2+).

Functionally, binds 16S rRNA, required for the assembly of 30S particles and may also be responsible for determining the conformation of the 16S rRNA at the A site. The polypeptide is Small ribosomal subunit protein uS14B (Streptococcus agalactiae serotype Ia (strain ATCC 27591 / A909 / CDC SS700)).